A 183-amino-acid chain; its full sequence is MKGVLKGLAVVVEDVEFARKLYKEGFYGRFLGYDKVRREEVDKISAPLILALYEALYLAERGKLKVVSKNGTEVLPEKLIELGREKIKNFDDIYKIYKYFRDLGYVVKSGLKFGALFSVYERGPGIDHAPMVVVFLEPDRGISATDITRGGRLSHSVKKTFTLATVSKQTGEVVLLGFSWAKL.

Active-site residues include tyrosine 120, histidine 128, and lysine 159.

It belongs to the tRNA-intron endonuclease family. Archaeal short subfamily. In terms of assembly, homotetramer; although the tetramer contains four active sites, only two participate in the cleavage. Therefore, it should be considered as a dimer of dimers.

The catalysed reaction is pretRNA = a 3'-half-tRNA molecule with a 5'-OH end + a 5'-half-tRNA molecule with a 2',3'-cyclic phosphate end + an intron with a 2',3'-cyclic phosphate and a 5'-hydroxyl terminus.. Functionally, endonuclease that removes tRNA introns. Cleaves pre-tRNA at the 5'- and 3'-splice sites to release the intron. The products are an intron and two tRNA half-molecules bearing 2',3' cyclic phosphate and 5'-OH termini. Recognizes a pseudosymmetric substrate in which 2 bulged loops of 3 bases are separated by a stem of 4 bp. This chain is tRNA-splicing endonuclease, found in Pyrobaculum islandicum (strain DSM 4184 / JCM 9189 / GEO3).